Reading from the N-terminus, the 396-residue chain is 2,3-diketo-5-methylthiopentyl-1-phosphate enolase (396 aa).

Lysine 85 acts as the Proton acceptor in catalysis. Substrate contacts are provided by residues lysine 134, 160–163 (KDDE), histidine 251, glycine 323, and 345–346 (GG). Mg(2+) contacts are provided by lysine 160, aspartate 162, and glutamate 163. At lysine 160 the chain carries N6-carboxylysine.

It belongs to the RuBisCO large chain family. Type IV subfamily. As to quaternary structure, homodimer. The cofactor is Mg(2+).

The enzyme catalyses 5-methylsulfanyl-2,3-dioxopentyl phosphate = 2-hydroxy-5-methylsulfanyl-3-oxopent-1-enyl phosphate. It functions in the pathway amino-acid biosynthesis; L-methionine biosynthesis via salvage pathway; L-methionine from S-methyl-5-thio-alpha-D-ribose 1-phosphate: step 3/6. Catalyzes the enolization of 2,3-diketo-5-methylthiopentyl-1-phosphate (DK-MTP-1-P) into 2-hydroxy-3-keto-5-methylthiopentenyl-1-phosphate (HK-MTPenyl-1-P). This is 2,3-diketo-5-methylthiopentyl-1-phosphate enolase from Exiguobacterium sibiricum (strain DSM 17290 / CCUG 55495 / CIP 109462 / JCM 13490 / 255-15).